A 503-amino-acid polypeptide reads, in one-letter code: Maturase K (503 aa).

It belongs to the intron maturase 2 family. MatK subfamily.

The protein localises to the plastid. The protein resides in the chloroplast. In terms of biological role, usually encoded in the trnK tRNA gene intron. Probably assists in splicing its own and other chloroplast group II introns. The chain is Maturase K from Lathyrus vestitus (Pacific pea).